A 241-amino-acid chain; its full sequence is Protocatechuate 3,4-dioxygenase beta chain (241 aa).

Fe cation is bound by residues Tyr109, Tyr148, His161, and His163.

The protein belongs to the intradiol ring-cleavage dioxygenase family. The enzyme is an oligomer of 12 copies of the alpha and beta chains. The cofactor is Fe(3+).

It carries out the reaction 3,4-dihydroxybenzoate + O2 = 3-carboxy-cis,cis-muconate + 2 H(+). The protein operates within aromatic compound metabolism; beta-ketoadipate pathway; 3-carboxy-cis,cis-muconate from 3,4-dihydroxybenzoate: step 1/1. Its function is as follows. Plays an essential role in the utilization of numerous aromatic and hydroaromatic compounds via the beta-ketoadipate pathway. The protein is Protocatechuate 3,4-dioxygenase beta chain (pcaH) of Acinetobacter baylyi (strain ATCC 33305 / BD413 / ADP1).